Reading from the N-terminus, the 401-residue chain is 26S proteasome regulatory subunit 6A (401 aa).

ATP is bound at residue 189–196; it reads GPPGTGKT.

This sequence belongs to the AAA ATPase family. In terms of assembly, the 26S proteasome consists of a 20S proteasome core and two 19S regulatory subunits. The 20S proteasome core is composed of 28 subunits that are arranged in four stacked rings, resulting in a barrel-shaped structure. The two end rings are each formed by seven alpha subunits, and the two central rings are each formed by seven beta subunits. The catalytic chamber with the active sites is on the inside of the barrel.

It is found in the cytoplasm. It localises to the nucleus. Its function is as follows. Acts as a regulatory subunit of the 26S proteasome which degrades poly-ubiquitinated proteins in the cytoplasm and in the nucleus. It is essential for the regulated turnover of proteins and for the removal of misfolded proteins. The proteasome is a multicatalytic proteinase complex that is characterized by its ability to cleave peptides with Arg, Phe, Tyr, Leu, and Glu adjacent to the leaving group at neutral or slightly basic pH. This chain is 26S proteasome regulatory subunit 6A (RPT5), found in Encephalitozoon cuniculi (strain GB-M1) (Microsporidian parasite).